The primary structure comprises 81 residues: Cytochrome c oxidase subunit 7B2, mitochondrial (81 aa).

The N-terminal 25 residues, 1 to 25 (MMFPLARNALSSLKIRSILQSMARQ), are a transit peptide targeting the mitochondrion. The Mitochondrial matrix portion of the chain corresponds to 26–33 (SHVKHSPD). Residues 34-60 (FHDKYGNAVLASGTAFCVVAWVFTATQ) form a helical membrane-spanning segment. The Mitochondrial intermembrane portion of the chain corresponds to 61 to 81 (IGIEWNLSPVGRVTPKEWKHQ).

Belongs to the cytochrome c oxidase VIIb family. As to quaternary structure, component of the cytochrome c oxidase (complex IV, CIV), a multisubunit enzyme composed of 14 subunits. The complex is composed of a catalytic core of 3 subunits MT-CO1, MT-CO2 and MT-CO3, encoded in the mitochondrial DNA, and 11 supernumerary subunits COX4I, COX5A, COX5B, COX6A, COX6B, COX6C, COX7A, COX7B, COX7C, COX8 and NDUFA4, which are encoded in the nuclear genome. The complex exists as a monomer or a dimer and forms supercomplexes (SCs) in the inner mitochondrial membrane with NADH-ubiquinone oxidoreductase (complex I, CI) and ubiquinol-cytochrome c oxidoreductase (cytochrome b-c1 complex, complex III, CIII), resulting in different assemblies (supercomplex SCI(1)III(2)IV(1) and megacomplex MCI(2)III(2)IV(2)).

It localises to the mitochondrion inner membrane. Its pathway is energy metabolism; oxidative phosphorylation. Its function is as follows. Component of the cytochrome c oxidase, the last enzyme in the mitochondrial electron transport chain which drives oxidative phosphorylation. The respiratory chain contains 3 multisubunit complexes succinate dehydrogenase (complex II, CII), ubiquinol-cytochrome c oxidoreductase (cytochrome b-c1 complex, complex III, CIII) and cytochrome c oxidase (complex IV, CIV), that cooperate to transfer electrons derived from NADH and succinate to molecular oxygen, creating an electrochemical gradient over the inner membrane that drives transmembrane transport and the ATP synthase. Cytochrome c oxidase is the component of the respiratory chain that catalyzes the reduction of oxygen to water. Electrons originating from reduced cytochrome c in the intermembrane space (IMS) are transferred via the dinuclear copper A center (CU(A)) of subunit 2 and heme A of subunit 1 to the active site in subunit 1, a binuclear center (BNC) formed by heme A3 and copper B (CU(B)). The BNC reduces molecular oxygen to 2 water molecules using 4 electrons from cytochrome c in the IMS and 4 protons from the mitochondrial matrix. The polypeptide is Cytochrome c oxidase subunit 7B2, mitochondrial (COX7B2) (Macaca fascicularis (Crab-eating macaque)).